Consider the following 136-residue polypeptide: Large ribosomal subunit protein bL17 (136 aa).

The protein belongs to the bacterial ribosomal protein bL17 family. As to quaternary structure, part of the 50S ribosomal subunit. Contacts protein L32.

The protein is Large ribosomal subunit protein bL17 of Akkermansia muciniphila (strain ATCC BAA-835 / DSM 22959 / JCM 33894 / BCRC 81048 / CCUG 64013 / CIP 107961 / Muc).